The primary structure comprises 82 residues: Putative ribonuclease VapC34 (82 aa).

Mg(2+) is bound at residue aspartate 4.

Belongs to the PINc/VapC protein family. Mg(2+) is required as a cofactor.

In terms of biological role, toxic component of a possible type II toxin-antitoxin (TA) system. A putative RNase. Its cognate antitoxin is VapB34. The protein is Putative ribonuclease VapC34 (vapC34) of Mycobacterium tuberculosis (strain CDC 1551 / Oshkosh).